We begin with the raw amino-acid sequence, 286 residues long: Pantothenate synthetase (286 aa).

Position 30–37 (30–37 (MGNLHEGH)) interacts with ATP. Catalysis depends on H37, which acts as the Proton donor. A (R)-pantoate-binding site is contributed by Q61. Q61 serves as a coordination point for beta-alanine. Position 149–152 (149–152 (GRKD)) interacts with ATP. Q155 contributes to the (R)-pantoate binding site. Residues V178 and 186–189 (MSSR) each bind ATP.

It belongs to the pantothenate synthetase family. As to quaternary structure, homodimer.

It is found in the cytoplasm. The catalysed reaction is (R)-pantoate + beta-alanine + ATP = (R)-pantothenate + AMP + diphosphate + H(+). It functions in the pathway cofactor biosynthesis; (R)-pantothenate biosynthesis; (R)-pantothenate from (R)-pantoate and beta-alanine: step 1/1. Functionally, catalyzes the condensation of pantoate with beta-alanine in an ATP-dependent reaction via a pantoyl-adenylate intermediate. The protein is Pantothenate synthetase of Alkalilimnicola ehrlichii (strain ATCC BAA-1101 / DSM 17681 / MLHE-1).